A 547-amino-acid chain; its full sequence is Chaperonin GroEL 2 (547 aa).

ATP-binding positions include 30–33 (TLGP), Lys51, 87–91 (DGTTT), Gly415, 479–481 (NAA), and Asp495. Residues 526–547 (KEESAAPAGGGMGGMGGMGGMM) form a disordered region. Gly residues predominate over residues 533 to 547 (AGGGMGGMGGMGGMM).

The protein belongs to the chaperonin (HSP60) family. In terms of assembly, forms a cylinder of 14 subunits composed of two heptameric rings stacked back-to-back. Interacts with the co-chaperonin GroES.

The protein localises to the cytoplasm. The enzyme catalyses ATP + H2O + a folded polypeptide = ADP + phosphate + an unfolded polypeptide.. Together with its co-chaperonin GroES, plays an essential role in assisting protein folding. The GroEL-GroES system forms a nano-cage that allows encapsulation of the non-native substrate proteins and provides a physical environment optimized to promote and accelerate protein folding. This Anaeromyxobacter sp. (strain Fw109-5) protein is Chaperonin GroEL 2.